Here is a 246-residue protein sequence, read N- to C-terminus: Octanoyltransferase (246 aa).

The region spanning 54 to 240 is the BPL/LPL catalytic domain; sequence DPPPEAVWLL…CLEPNADAAI (187 aa). Substrate contacts are provided by residues 96-103, 163-165, and 176-178; these read RGGEVTHH, AIG, and GVA. Cysteine 194 (acyl-thioester intermediate) is an active-site residue.

Belongs to the LipB family.

It localises to the cytoplasm. The enzyme catalyses octanoyl-[ACP] + L-lysyl-[protein] = N(6)-octanoyl-L-lysyl-[protein] + holo-[ACP] + H(+). Its pathway is protein modification; protein lipoylation via endogenous pathway; protein N(6)-(lipoyl)lysine from octanoyl-[acyl-carrier-protein]: step 1/2. Functionally, catalyzes the transfer of endogenously produced octanoic acid from octanoyl-acyl-carrier-protein onto the lipoyl domains of lipoate-dependent enzymes. Lipoyl-ACP can also act as a substrate although octanoyl-ACP is likely to be the physiological substrate. This chain is Octanoyltransferase, found in Synechococcus sp. (strain WH7803).